A 205-amino-acid polypeptide reads, in one-letter code: Thymidylate kinase (205 aa).

7 to 14 is an ATP binding site; it reads GIDGSGKT.

Belongs to the thymidylate kinase family.

It catalyses the reaction dTMP + ATP = dTDP + ADP. In terms of biological role, phosphorylation of dTMP to form dTDP in both de novo and salvage pathways of dTTP synthesis. The polypeptide is Thymidylate kinase (Wolbachia pipientis subsp. Culex pipiens (strain wPip)).